The chain runs to 316 residues: Transaldolase 1 (316 aa).

Catalysis depends on Lys131, which acts as the Schiff-base intermediate with substrate.

This sequence belongs to the transaldolase family. Type 1 subfamily. As to quaternary structure, homodimer.

The protein resides in the cytoplasm. The enzyme catalyses D-sedoheptulose 7-phosphate + D-glyceraldehyde 3-phosphate = D-erythrose 4-phosphate + beta-D-fructose 6-phosphate. The protein operates within carbohydrate degradation; pentose phosphate pathway; D-glyceraldehyde 3-phosphate and beta-D-fructose 6-phosphate from D-ribose 5-phosphate and D-xylulose 5-phosphate (non-oxidative stage): step 2/3. Transaldolase is important for the balance of metabolites in the pentose-phosphate pathway. In Pectobacterium atrosepticum (strain SCRI 1043 / ATCC BAA-672) (Erwinia carotovora subsp. atroseptica), this protein is Transaldolase 1.